The following is a 431-amino-acid chain: D-inositol 3-phosphate glycosyltransferase (431 aa).

Position 21 (His-21) interacts with 1D-myo-inositol 3-phosphate. Residues 27–28 and Gly-35 contribute to the UDP-N-acetyl-alpha-D-glucosamine site; that span reads QP. Residues 32-37, Arg-90, Tyr-123, Thr-147, and Arg-167 each bind 1D-myo-inositol 3-phosphate; that span reads DAGGMN. Arg-241, Lys-246, and Gln-307 together coordinate UDP-N-acetyl-alpha-D-glucosamine. Residues Tyr-316, Arg-317, and Ala-319 each contribute to the Mg(2+) site. Residues Glu-329 and Glu-337 each contribute to the UDP-N-acetyl-alpha-D-glucosamine site. Thr-343 contributes to the Mg(2+) binding site.

It belongs to the glycosyltransferase group 1 family. MshA subfamily. In terms of assembly, homodimer.

The catalysed reaction is 1D-myo-inositol 3-phosphate + UDP-N-acetyl-alpha-D-glucosamine = 1D-myo-inositol 2-acetamido-2-deoxy-alpha-D-glucopyranoside 3-phosphate + UDP + H(+). Functionally, catalyzes the transfer of a N-acetyl-glucosamine moiety to 1D-myo-inositol 3-phosphate to produce 1D-myo-inositol 2-acetamido-2-deoxy-glucopyranoside 3-phosphate in the mycothiol biosynthesis pathway. This chain is D-inositol 3-phosphate glycosyltransferase, found in Saccharomonospora viridis (strain ATCC 15386 / DSM 43017 / JCM 3036 / CCUG 5913 / NBRC 12207 / NCIMB 9602 / P101) (Thermoactinomyces viridis).